Reading from the N-terminus, the 294-residue chain is Taste receptor type 2 member 143 (294 aa).

The Extracellular segment spans residues 1 to 7 (MPSTPTL). The chain crosses the membrane as a helical span at residues 8–28 (IFIVIFFLVSVASMLQNGFMI). Topologically, residues 29–43 (IVLGREWMRNRALPA) are cytoplasmic. The helical transmembrane segment at 44-64 (VDMIVASLASSRFCLHGIAIL) threads the bilayer. Topologically, residues 65-80 (NNFLASFDFCYQANFV) are extracellular. Residues 81 to 101 (GILWDFINTLILWLTAWLAIF) traverse the membrane as a helical segment. Over 102–128 (YCVKISSFSHPVLFWLKWRISQLVPRL) the chain is Cytoplasmic. Residues 129 to 149 (LLVSLIMGGLSAIISATGNII) form a helical membrane-spanning segment. At 150-180 (ANQMIISQGFHGNCTFGHMSLDFYRYYYLSH) the chain is on the extracellular side. N-linked (GlcNAc...) asparagine glycosylation occurs at N162. Residues 181 to 201 (AVLMWFTPFFLFLVSIIFLMF) form a helical membrane-spanning segment. The Cytoplasmic segment spans residues 202–227 (SLYRHVEKMRGHRPGPWDPRTQAHTM). Residues 228–248 (ALKSLTVFITFYILFFLALII) form a helical membrane-spanning segment. Topologically, residues 249–260 (SSTKSKTMHSYW) are extracellular. A helical membrane pass occupies residues 261-281 (YWVREIIIYTGIFLNSIILVL). At 282–294 (SNPKLRKALKMRF) the chain is on the cytoplasmic side.

The protein belongs to the G-protein coupled receptor T2R family.

Its subcellular location is the membrane. Its function is as follows. Putative taste receptor which may play a role in the perception of bitterness. The protein is Taste receptor type 2 member 143 of Rattus norvegicus (Rat).